The chain runs to 128 residues: Cytochrome c-type biogenesis protein CcmE (128 aa).

The Cytoplasmic portion of the chain corresponds to 1–8 (MQKRVRNR). A helical; Signal-anchor for type II membrane protein membrane pass occupies residues 9-29 (LITIIICFCSAFLGIGIILYN). Residues 30–128 (LENNIVFFLP…KHDENYRPTR (99 aa)) lie on the Periplasmic side of the membrane. Heme contacts are provided by H120 and Y124.

Belongs to the CcmE/CycJ family.

Its subcellular location is the cell inner membrane. Functionally, heme chaperone required for the biogenesis of c-type cytochromes. Transiently binds heme delivered by CcmC and transfers the heme to apo-cytochromes in a process facilitated by CcmF and CcmH. The sequence is that of Cytochrome c-type biogenesis protein CcmE from Rickettsia canadensis (strain McKiel).